Reading from the N-terminus, the 1040-residue chain is Multidrug resistance protein MdtB (1040 aa).

Helical transmembrane passes span 25–45 (LLMA…PVAA), 347–367 (LMLA…NIPA), 369–389 (IIPG…MVFL), 396–416 (LTLM…IVVI), 440–460 (IGFT…PLLF), 472–492 (FAVT…TLTP), 537–557 (WLTL…WIVI), 863–883 (LGST…VLGV), 888–908 (FIHP…ALLA), 910–930 (IIAG…LIGI), 968–988 (ILMT…STGV), and 998–1018 (IAMV…TPVI).

This sequence belongs to the resistance-nodulation-cell division (RND) (TC 2.A.6) family. MdtB subfamily. In terms of assembly, part of a tripartite efflux system composed of MdtA, MdtB and MdtC. MdtB forms a heteromultimer with MdtC.

The protein resides in the cell inner membrane. The polypeptide is Multidrug resistance protein MdtB (Salmonella agona (strain SL483)).